A 476-amino-acid chain; its full sequence is Ribulose bisphosphate carboxylase large chain (476 aa).

Positions 124 and 174 each coordinate substrate. The active-site Proton acceptor is Lys-176. Residue Lys-178 participates in substrate binding. Positions 202, 204, and 205 each coordinate Mg(2+). Lys-202 is modified (N6-carboxylysine). The active-site Proton acceptor is His-295. Substrate-binding residues include Arg-296, His-328, and Ser-380.

It belongs to the RuBisCO large chain family. Type I subfamily. As to quaternary structure, heterohexadecamer of 8 large chains and 8 small chains; disulfide-linked. The disulfide link is formed within the large subunit homodimers. Requires Mg(2+) as cofactor. Post-translationally, the disulfide bond which can form in the large chain dimeric partners within the hexadecamer appears to be associated with oxidative stress and protein turnover.

The protein localises to the carboxysome. It catalyses the reaction 2 (2R)-3-phosphoglycerate + 2 H(+) = D-ribulose 1,5-bisphosphate + CO2 + H2O. The catalysed reaction is D-ribulose 1,5-bisphosphate + O2 = 2-phosphoglycolate + (2R)-3-phosphoglycerate + 2 H(+). In terms of biological role, ruBisCO catalyzes two reactions: the carboxylation of D-ribulose 1,5-bisphosphate, the primary event in carbon dioxide fixation, as well as the oxidative fragmentation of the pentose substrate in the photorespiration process. Both reactions occur simultaneously and in competition at the same active site. In Nostoc punctiforme (strain ATCC 29133 / PCC 73102), this protein is Ribulose bisphosphate carboxylase large chain.